The sequence spans 118 residues: Large ribosomal subunit protein bL20 (118 aa).

The protein belongs to the bacterial ribosomal protein bL20 family.

Binds directly to 23S ribosomal RNA and is necessary for the in vitro assembly process of the 50S ribosomal subunit. It is not involved in the protein synthesizing functions of that subunit. This Staphylococcus carnosus (strain TM300) protein is Large ribosomal subunit protein bL20.